The following is a 448-amino-acid chain: Ribosomal protein uS12 methylthiotransferase RimO (448 aa).

The region spanning 7–119 (QSLHLISLGC…IDSMIAQRRS (113 aa)) is the MTTase N-terminal domain. Residues C16, C50, C82, C151, C155, and C158 each contribute to the [4Fe-4S] cluster site. Residues 137–366 (IGSSFHAYIK…NKIIQSQYKA (230 aa)) form the Radical SAM core domain.

Belongs to the methylthiotransferase family. RimO subfamily. [4Fe-4S] cluster serves as cofactor.

The protein resides in the cytoplasm. The catalysed reaction is L-aspartate(89)-[ribosomal protein uS12]-hydrogen + (sulfur carrier)-SH + AH2 + 2 S-adenosyl-L-methionine = 3-methylsulfanyl-L-aspartate(89)-[ribosomal protein uS12]-hydrogen + (sulfur carrier)-H + 5'-deoxyadenosine + L-methionine + A + S-adenosyl-L-homocysteine + 2 H(+). Its function is as follows. Catalyzes the methylthiolation of an aspartic acid residue of ribosomal protein uS12. This chain is Ribosomal protein uS12 methylthiotransferase RimO, found in Helicobacter hepaticus (strain ATCC 51449 / 3B1).